Here is an 863-residue protein sequence, read N- to C-terminus: Leucine-rich repeat and death domain-containing protein 1 (863 aa).

Disordered regions lie at residues 1–37 and 51–100; these read MSEKEGMSEELEDTISQFRKESRSQSVKEPGFIKETS and SSNQ…SQSL. Over residues 88 to 100 the composition is skewed to low complexity; the sequence is SETSTRTETSQSL. LRR repeat units follow at residues 143-166, 167-189, 190-213, 214-236, 238-259, 260-282, 284-305, 306-328, 329-351, 353-374, 375-397, 398-420, 422-443, 445-466, 468-489, 490-513, 515-535, 536-558, 560-581, 582-604, 606-627, 630-653, 654-676, 678-699, 700-722, and 724-745; these read CKDNFTVNLEAKGLQEFPKDILKI, KYVKHLYLDKNQIKTFQGADSGD, LLGLEILSLQENGLSSLPSEIQLL, HNLRILNVSHNHISHIPKEISQL, NIRQLFFYNNYIENFPSDLECL, GNLEILSLGKNKLRHIPDTLPSL, YLRVLNLEYNQLTIFPKALCFL, PKLISLDLTGNLISSLPKEIREL, KNLETLLLDHNKLTFLAVEIFQL, KIKELQLADNKLEVISHKIENF, RELRILILDKNLLKNIPEKICCC, AMLECLTLSDNKLTELPKNIHKL, NLRKLHVNRNNMVKITDSISHL, NICSLEFSGNIIAGIPIEIKNC, KIIKIELNYNKIMYFPLGLCAL, DSLYYLSVNGNYISEIPADISFSK, LLHLELSENKLLIFSEHFCSL, INLKYLDLGKNQIKKIPASISNM, SLHVLILCCNKFETFPRELCTL, ENLRVLDLSENQLQKISSDICNL, RIQKLNFSSNQFIHFPIELCQL, LEQLNISQIKGRKLTRLPGELSNM, TQLKELDISNNAIREIPRNIGEL, NLVSLHAYNNQISYIPPSLLSL, NDLQQLNLSGNNLTALPSAIYNL, and SLKEINFDDNPLLRPPMEICKG. In terms of domain architecture, Death spans 767–855; the sequence is EKIFKIVANN…EIMDKITALN (89 aa). The stretch at 856 to 863 is one LRR 27 repeat; the sequence is LFTRAIKF.

This Macaca fascicularis (Crab-eating macaque) protein is Leucine-rich repeat and death domain-containing protein 1 (LRRD1).